The following is a 291-amino-acid chain: N-acetylmannosamine kinase (291 aa).

ATP contacts are provided by residues 5 to 12 and 132 to 139; these read AIDIGGTK and GVGGGVVC. Zn(2+)-binding residues include His156, Cys166, Cys168, and Cys173.

It belongs to the ROK (NagC/XylR) family. NanK subfamily. Homodimer.

The enzyme catalyses an N-acyl-D-mannosamine + ATP = an N-acyl-D-mannosamine 6-phosphate + ADP + H(+). Its pathway is amino-sugar metabolism; N-acetylneuraminate degradation; D-fructose 6-phosphate from N-acetylneuraminate: step 2/5. In terms of biological role, catalyzes the phosphorylation of N-acetylmannosamine (ManNAc) to ManNAc-6-P. This Salmonella paratyphi A (strain ATCC 9150 / SARB42) protein is N-acetylmannosamine kinase.